The chain runs to 576 residues: Proline--tRNA ligase (576 aa).

This sequence belongs to the class-II aminoacyl-tRNA synthetase family. ProS type 1 subfamily. Homodimer.

The protein resides in the cytoplasm. It catalyses the reaction tRNA(Pro) + L-proline + ATP = L-prolyl-tRNA(Pro) + AMP + diphosphate. In terms of biological role, catalyzes the attachment of proline to tRNA(Pro) in a two-step reaction: proline is first activated by ATP to form Pro-AMP and then transferred to the acceptor end of tRNA(Pro). As ProRS can inadvertently accommodate and process non-cognate amino acids such as alanine and cysteine, to avoid such errors it has two additional distinct editing activities against alanine. One activity is designated as 'pretransfer' editing and involves the tRNA(Pro)-independent hydrolysis of activated Ala-AMP. The other activity is designated 'posttransfer' editing and involves deacylation of mischarged Ala-tRNA(Pro). The misacylated Cys-tRNA(Pro) is not edited by ProRS. In Dechloromonas aromatica (strain RCB), this protein is Proline--tRNA ligase.